We begin with the raw amino-acid sequence, 93 residues long: Small ribosomal subunit protein uS19 (93 aa).

Residues 1–23 form a disordered region; sequence MPRSLKKGPFVDDHLQKKVDAEN. Residues 9–23 show a composition bias toward basic and acidic residues; it reads PFVDDHLQKKVDAEN.

Belongs to the universal ribosomal protein uS19 family.

Functionally, protein S19 forms a complex with S13 that binds strongly to the 16S ribosomal RNA. The polypeptide is Small ribosomal subunit protein uS19 (Nocardioides sp. (strain ATCC BAA-499 / JS614)).